The chain runs to 250 residues: 7-carboxy-7-deazaguanine synthase (250 aa).

Substrate contacts are provided by residues 15–17 and arginine 30; that span reads VQG. The region spanning 21–250 is the Radical SAM core domain; sequence LIGLRQVFIR…PQTHRFMGQL (230 aa). [4Fe-4S] cluster is bound by residues cysteine 34, cysteine 38, and cysteine 41. Threonine 43 is a Mg(2+) binding site. Threonine 96 contributes to the substrate binding site. Residue glycine 98 coordinates S-adenosyl-L-methionine.

Belongs to the radical SAM superfamily. 7-carboxy-7-deazaguanine synthase family. As to quaternary structure, homodimer. [4Fe-4S] cluster serves as cofactor. It depends on S-adenosyl-L-methionine as a cofactor. The cofactor is Mg(2+).

It catalyses the reaction 6-carboxy-5,6,7,8-tetrahydropterin + H(+) = 7-carboxy-7-deazaguanine + NH4(+). It participates in purine metabolism; 7-cyano-7-deazaguanine biosynthesis. Catalyzes the complex heterocyclic radical-mediated conversion of 6-carboxy-5,6,7,8-tetrahydropterin (CPH4) to 7-carboxy-7-deazaguanine (CDG), a step common to the biosynthetic pathways of all 7-deazapurine-containing compounds. This is 7-carboxy-7-deazaguanine synthase from Geobacter sulfurreducens (strain ATCC 51573 / DSM 12127 / PCA).